Here is a 366-residue protein sequence, read N- to C-terminus: tRNA/tmRNA (uracil-C(5))-methyltransferase (366 aa).

Q190, Y218, N223, E239, and D299 together coordinate S-adenosyl-L-methionine. C324 serves as the catalytic Nucleophile. E358 (proton acceptor) is an active-site residue.

Belongs to the class I-like SAM-binding methyltransferase superfamily. RNA M5U methyltransferase family. TrmA subfamily.

The catalysed reaction is uridine(54) in tRNA + S-adenosyl-L-methionine = 5-methyluridine(54) in tRNA + S-adenosyl-L-homocysteine + H(+). It carries out the reaction uridine(341) in tmRNA + S-adenosyl-L-methionine = 5-methyluridine(341) in tmRNA + S-adenosyl-L-homocysteine + H(+). Functionally, dual-specificity methyltransferase that catalyzes the formation of 5-methyluridine at position 54 (m5U54) in all tRNAs, and that of position 341 (m5U341) in tmRNA (transfer-mRNA). This Shigella flexneri serotype 5b (strain 8401) protein is tRNA/tmRNA (uracil-C(5))-methyltransferase.